Reading from the N-terminus, the 276-residue chain is Potassium/proton antiporter CemA (276 aa).

Helical transmembrane passes span leucine 59 to glycine 79, phenylalanine 199 to valine 219, and phenylalanine 236 to isoleucine 256.

This sequence belongs to the CemA family.

The protein localises to the plastid. It is found in the chloroplast inner membrane. The enzyme catalyses K(+)(in) + H(+)(out) = K(+)(out) + H(+)(in). In terms of biological role, contributes to K(+)/H(+) antiport activity by supporting proton efflux to control proton extrusion and homeostasis in chloroplasts in a light-dependent manner to modulate photosynthesis. Prevents excessive induction of non-photochemical quenching (NPQ) under continuous-light conditions. Indirectly promotes efficient inorganic carbon uptake into chloroplasts. The protein is Potassium/proton antiporter CemA of Cyanidioschyzon merolae (strain NIES-3377 / 10D) (Unicellular red alga).